The chain runs to 153 residues: MVVKAVCVINGDAKGTVFFEQESSETPVKVSGEVCGLAKCLHGFHVHEFGDNTNGCMSSGPHFNPHGKEHGAPVDENRHLGDLGNIEATGDCPTKVSITDSKITLFGADSIIGRTVVVHADADDLGKGGHELSKSTGNAGARIGCGVIGIAKV.

Cu cation-binding residues include H45, H47, and H62. The cysteines at positions 56 and 145 are disulfide-linked. Residues H62, H70, H79, and D82 each contribute to the Zn(2+) site. H119 contacts Cu cation.

Belongs to the Cu-Zn superoxide dismutase family. In terms of assembly, homodimer. Cu cation serves as cofactor. It depends on Zn(2+) as a cofactor.

Its subcellular location is the cytoplasm. It catalyses the reaction 2 superoxide + 2 H(+) = H2O2 + O2. Its function is as follows. Destroys radicals which are normally produced within the cells and which are toxic to biological systems. The protein is Superoxide dismutase [Cu-Zn] of Drosophila erecta (Fruit fly).